Here is a 906-residue protein sequence, read N- to C-terminus: Protein translocase subunit SecA (906 aa).

Residues glutamine 87, glycine 105–threonine 109, and aspartate 513 each bind ATP. The tract at residues glutamine 860 to aspartate 906 is disordered. Residues threonine 876 to arginine 886 show a composition bias toward basic and acidic residues. 4 residues coordinate Zn(2+): cysteine 890, cysteine 892, cysteine 901, and histidine 902. The segment covering lysine 896 to aspartate 906 has biased composition (basic residues).

This sequence belongs to the SecA family. Monomer and homodimer. Part of the essential Sec protein translocation apparatus which comprises SecA, SecYEG and auxiliary proteins SecDF-YajC and YidC. Zn(2+) is required as a cofactor.

It is found in the cell inner membrane. Its subcellular location is the cytoplasm. It carries out the reaction ATP + H2O + cellular proteinSide 1 = ADP + phosphate + cellular proteinSide 2.. Part of the Sec protein translocase complex. Interacts with the SecYEG preprotein conducting channel. Has a central role in coupling the hydrolysis of ATP to the transfer of proteins into and across the cell membrane, serving both as a receptor for the preprotein-SecB complex and as an ATP-driven molecular motor driving the stepwise translocation of polypeptide chains across the membrane. In Psychromonas ingrahamii (strain DSM 17664 / CCUG 51855 / 37), this protein is Protein translocase subunit SecA.